Consider the following 316-residue polypeptide: Methionyl-tRNA formyltransferase (316 aa).

113–116 is a (6S)-5,6,7,8-tetrahydrofolate binding site; sequence SLLP.

This sequence belongs to the Fmt family.

It carries out the reaction L-methionyl-tRNA(fMet) + (6R)-10-formyltetrahydrofolate = N-formyl-L-methionyl-tRNA(fMet) + (6S)-5,6,7,8-tetrahydrofolate + H(+). Attaches a formyl group to the free amino group of methionyl-tRNA(fMet). The formyl group appears to play a dual role in the initiator identity of N-formylmethionyl-tRNA by promoting its recognition by IF2 and preventing the misappropriation of this tRNA by the elongation apparatus. This chain is Methionyl-tRNA formyltransferase, found in Sodalis glossinidius (strain morsitans).